The primary structure comprises 109 residues: Large ribosomal subunit protein uL22 (109 aa).

This sequence belongs to the universal ribosomal protein uL22 family. Part of the 50S ribosomal subunit.

In terms of biological role, this protein binds specifically to 23S rRNA; its binding is stimulated by other ribosomal proteins, e.g. L4, L17, and L20. It is important during the early stages of 50S assembly. It makes multiple contacts with different domains of the 23S rRNA in the assembled 50S subunit and ribosome. Its function is as follows. The globular domain of the protein is located near the polypeptide exit tunnel on the outside of the subunit, while an extended beta-hairpin is found that lines the wall of the exit tunnel in the center of the 70S ribosome. This chain is Large ribosomal subunit protein uL22, found in Bordetella avium (strain 197N).